Consider the following 22-residue polypeptide: Mu-conotoxin CnIIIC (22 aa).

At Q1 the chain carries Pyrrolidone carboxylic acid; partial. Cystine bridges form between C3–C15, C4–C21, and C10–C22. C22 carries the cysteine amide modification.

This sequence belongs to the conotoxin M superfamily. As to expression, expressed by the venom duct.

Its subcellular location is the secreted. In terms of biological role, mu-conotoxins block voltage-gated sodium channels (Nav). This synthetic toxin blocks both voltage-gated sodium channels and nicotinic acetylcholine receptor (nAChR). Inhibits the skeletal muscle rNav1.4/SCN4A (IC(50)=1.3 nM) and the brain rNav1.2/SCN2A in a long-lasting manner. A low inhibition is also observed on neuronal mNav1.6/SCN8A and mNav1.7/SCN9A. Modestly blocks nAChR alpha-3/beta-2 subtype (IC(50)=450 nM) (partially reversible) and, to a lesser extent, alpha-7 and alpha-4/beta-2 subtypes (reversible). In vitro, decreases twitch tension in mouse hemidiaphragms (IC(50)=150 nM), and displays a high blocking effect in mouse extensor digitorum longus muscles (IC(50)=46 nM). In Conus consors (Singed cone), this protein is Mu-conotoxin CnIIIC.